The chain runs to 237 residues: Ribonuclease PH (237 aa).

Phosphate-binding positions include Arg-86 and 124–126; that span reads GTR.

The protein belongs to the RNase PH family. Homohexameric ring arranged as a trimer of dimers.

It carries out the reaction tRNA(n+1) + phosphate = tRNA(n) + a ribonucleoside 5'-diphosphate. Functionally, phosphorolytic 3'-5' exoribonuclease that plays an important role in tRNA 3'-end maturation. Removes nucleotide residues following the 3'-CCA terminus of tRNAs; can also add nucleotides to the ends of RNA molecules by using nucleoside diphosphates as substrates, but this may not be physiologically important. Probably plays a role in initiation of 16S rRNA degradation (leading to ribosome degradation) during starvation. This chain is Ribonuclease PH, found in Methylorubrum populi (strain ATCC BAA-705 / NCIMB 13946 / BJ001) (Methylobacterium populi).